The sequence spans 173 residues: Protein-export protein SecB (173 aa).

It belongs to the SecB family. Homotetramer, a dimer of dimers. One homotetramer interacts with 1 SecA dimer.

It localises to the cytoplasm. Its function is as follows. One of the proteins required for the normal export of preproteins out of the cell cytoplasm. It is a molecular chaperone that binds to a subset of precursor proteins, maintaining them in a translocation-competent state. It also specifically binds to its receptor SecA. The chain is Protein-export protein SecB from Novosphingobium aromaticivorans (strain ATCC 700278 / DSM 12444 / CCUG 56034 / CIP 105152 / NBRC 16084 / F199).